The following is a 1186-amino-acid chain: ATP-dependent helicase/nuclease subunit A (1186 aa).

Positions 2-460 (NFSKNQRAVI…IELSENYRSQ (459 aa)) constitute a UvrD-like helicase ATP-binding domain. ATP is bound at residue 23-30 (ASAGSGKT). One can recognise a UvrD-like helicase C-terminal domain in the interval 487–771 (DVELKAANRD…SVMTIHAAKG (285 aa)).

The protein belongs to the helicase family. AddA subfamily. In terms of assembly, heterodimer of AddA and AddB/RexB. The cofactor is Mg(2+).

The catalysed reaction is Couples ATP hydrolysis with the unwinding of duplex DNA by translocating in the 3'-5' direction.. It catalyses the reaction ATP + H2O = ADP + phosphate + H(+). In terms of biological role, the heterodimer acts as both an ATP-dependent DNA helicase and an ATP-dependent, dual-direction single-stranded exonuclease. Recognizes the chi site generating a DNA molecule suitable for the initiation of homologous recombination. The AddA nuclease domain is required for chi fragment generation; this subunit has the helicase and 3' -&gt; 5' nuclease activities. This is ATP-dependent helicase/nuclease subunit A from Oenococcus oeni (strain ATCC BAA-331 / PSU-1).